Reading from the N-terminus, the 328-residue chain is E3 ubiquitin-protein ligase RING1-like (328 aa).

Ser2 bears the N-acetylserine mark. An RING-type; atypical zinc finger spans residues 216–257; it reads CAVCMDEFEDGSDVKQMPCKHVFHQDCLLPWLELHNSCPVCR. Residues 264–328 form a disordered region; the sequence is DPDYENRSQG…NLETRGEDLD (65 aa). Residues 306–319 show a composition bias toward gly residues; sequence SGSGSGAPGTGGGN.

In terms of processing, auto-ubiquitinated as part of the enzymatic reaction. In terms of tissue distribution, expressed in leaves, roots, trichomes, stipules, and also in anthers and stigma of flowers.

It carries out the reaction S-ubiquitinyl-[E2 ubiquitin-conjugating enzyme]-L-cysteine + [acceptor protein]-L-lysine = [E2 ubiquitin-conjugating enzyme]-L-cysteine + N(6)-ubiquitinyl-[acceptor protein]-L-lysine.. The protein operates within protein modification; protein ubiquitination. In terms of biological role, E3 ubiquitin-protein ligase which accepts ubiquitin from an E2 ubiquitin-conjugating enzyme in the form of a thioester and then directly transfers the ubiquitin to targeted substrates. Promotes polyubiquitination of target proteins. This chain is E3 ubiquitin-protein ligase RING1-like, found in Arabidopsis thaliana (Mouse-ear cress).